The sequence spans 135 residues: Transcription antitermination protein NusB (135 aa).

This sequence belongs to the NusB family.

Functionally, involved in transcription antitermination. Required for transcription of ribosomal RNA (rRNA) genes. Binds specifically to the boxA antiterminator sequence of the ribosomal RNA (rrn) operons. This is Transcription antitermination protein NusB from Clostridium perfringens (strain ATCC 13124 / DSM 756 / JCM 1290 / NCIMB 6125 / NCTC 8237 / Type A).